A 326-amino-acid chain; its full sequence is Ketol-acid reductoisomerase (NADP(+)) (326 aa).

One can recognise a KARI N-terminal Rossmann domain in the interval 2–182 (AKIYGDEDAS…GFTRAGVIKT (181 aa)). NADP(+) is bound by residues 25–28 (YGSQ), arginine 48, serine 53, and 83–86 (DEVQ). Histidine 108 is a catalytic residue. Glycine 134 provides a ligand contact to NADP(+). Residues 183-325 (TFREEVETDL…ERLRKMMGFE (143 aa)) form the KARI C-terminal knotted domain. Mg(2+) is bound by residues aspartate 191, glutamate 195, glutamate 227, and glutamate 231. Residue serine 252 coordinates substrate.

The protein belongs to the ketol-acid reductoisomerase family. Mg(2+) is required as a cofactor.

The enzyme catalyses (2R)-2,3-dihydroxy-3-methylbutanoate + NADP(+) = (2S)-2-acetolactate + NADPH + H(+). The catalysed reaction is (2R,3R)-2,3-dihydroxy-3-methylpentanoate + NADP(+) = (S)-2-ethyl-2-hydroxy-3-oxobutanoate + NADPH + H(+). The protein operates within amino-acid biosynthesis; L-isoleucine biosynthesis; L-isoleucine from 2-oxobutanoate: step 2/4. It participates in amino-acid biosynthesis; L-valine biosynthesis; L-valine from pyruvate: step 2/4. In terms of biological role, involved in the biosynthesis of branched-chain amino acids (BCAA). Catalyzes an alkyl-migration followed by a ketol-acid reduction of (S)-2-acetolactate (S2AL) to yield (R)-2,3-dihydroxy-isovalerate. In the isomerase reaction, S2AL is rearranged via a Mg-dependent methyl migration to produce 3-hydroxy-3-methyl-2-ketobutyrate (HMKB). In the reductase reaction, this 2-ketoacid undergoes a metal-dependent reduction by NADPH to yield (R)-2,3-dihydroxy-isovalerate. This Methanopyrus kandleri (strain AV19 / DSM 6324 / JCM 9639 / NBRC 100938) protein is Ketol-acid reductoisomerase (NADP(+)).